The sequence spans 319 residues: tRNA-cytidine(32) 2-sulfurtransferase (319 aa).

Residues 43-48 (SGGKDS) carry the PP-loop motif motif. Residues C118, C121, and C209 each contribute to the [4Fe-4S] cluster site.

Belongs to the TtcA family. In terms of assembly, homodimer. The cofactor is Mg(2+). [4Fe-4S] cluster serves as cofactor.

The protein resides in the cytoplasm. The enzyme catalyses cytidine(32) in tRNA + S-sulfanyl-L-cysteinyl-[cysteine desulfurase] + AH2 + ATP = 2-thiocytidine(32) in tRNA + L-cysteinyl-[cysteine desulfurase] + A + AMP + diphosphate + H(+). Its pathway is tRNA modification. In terms of biological role, catalyzes the ATP-dependent 2-thiolation of cytidine in position 32 of tRNA, to form 2-thiocytidine (s(2)C32). The sulfur atoms are provided by the cysteine/cysteine desulfurase (IscS) system. This is tRNA-cytidine(32) 2-sulfurtransferase from Neisseria meningitidis serogroup C / serotype 2a (strain ATCC 700532 / DSM 15464 / FAM18).